We begin with the raw amino-acid sequence, 142 residues long: Hemoglobin subunit alpha (142 aa).

The 141-residue stretch at Val2 to Arg142 folds into the Globin domain. Ser4 is subject to Phosphoserine. Residues Lys8 and Lys12 each carry the N6-succinyllysine modification. An N6-acetyllysine; alternate modification is found at Lys17. Residue Lys17 is modified to N6-succinyllysine; alternate. Tyr25 carries the post-translational modification Phosphotyrosine. At Ser36 the chain carries Phosphoserine. N6-succinyllysine is present on Lys41. Residue Ser50 is modified to Phosphoserine. Position 59 (His59) interacts with O2. His88 serves as a coordination point for heme b. Ser103 carries the phosphoserine modification. Thr109 carries the post-translational modification Phosphothreonine. Residues Ser125 and Ser132 each carry the phosphoserine modification. 2 positions are modified to phosphothreonine: Thr135 and Thr138. Phosphoserine is present on Ser139.

It belongs to the globin family. Heterotetramer of two alpha chains and two beta chains. Red blood cells.

Its function is as follows. Involved in oxygen transport from the lung to the various peripheral tissues. In terms of biological role, hemopressin acts as an antagonist peptide of the cannabinoid receptor CNR1. Hemopressin-binding efficiently blocks cannabinoid receptor CNR1 and subsequent signaling. In Chlorocebus aethiops (Green monkey), this protein is Hemoglobin subunit alpha (HBA).